A 187-amino-acid polypeptide reads, in one-letter code: Protein GrpE (187 aa).

Residues 1-17 (MSNEEQQQPNPAAQAPE) show a composition bias toward low complexity. Residues 1–27 (MSNEEQQQPNPAAQAPEGAVTEGAAPE) are disordered.

The protein belongs to the GrpE family. Homodimer.

Its subcellular location is the cytoplasm. Its function is as follows. Participates actively in the response to hyperosmotic and heat shock by preventing the aggregation of stress-denatured proteins, in association with DnaK and GrpE. It is the nucleotide exchange factor for DnaK and may function as a thermosensor. Unfolded proteins bind initially to DnaJ; upon interaction with the DnaJ-bound protein, DnaK hydrolyzes its bound ATP, resulting in the formation of a stable complex. GrpE releases ADP from DnaK; ATP binding to DnaK triggers the release of the substrate protein, thus completing the reaction cycle. Several rounds of ATP-dependent interactions between DnaJ, DnaK and GrpE are required for fully efficient folding. This Thioalkalivibrio sulfidiphilus (strain HL-EbGR7) protein is Protein GrpE.